A 73-amino-acid polypeptide reads, in one-letter code: Lactogenin (73 aa).

Residue Q1 is modified to Pyrrolidone carboxylic acid.

The protein belongs to the pancreatic ribonuclease family. Milk.

The protein localises to the secreted. Its function is as follows. Secretory RNase specific towards pyrimidine bases, with higher activity towards poly C than poly U. Inhibits cell-free translation. This Bos taurus (Bovine) protein is Lactogenin.